A 391-amino-acid chain; its full sequence is Glycosyltransferase afumC (391 aa).

Belongs to the afumC glycosyltransferase family.

It participates in secondary metabolite biosynthesis. Its activity is regulated as follows. Activity is significantly decreased by addition of divalent cations such as Mg(2+), Mn(2+), Zn(2+), Ca(2+), Co(2+), Cu(2+), and Ni(2+); while Fe(2+) has little effect. Glycosyltransferase; part of the gene cluster that mediates the biosynthesis fumihopaside A, a hopane-type glucoside that enhances the thermotolerance and UV resistance of N.fumigata. The first step of fumihopaside A biosynthesis is performed by the squalene hopane cyclase afumA that catalyzes the cyclization of 3S-oxidosqualene into the hopene 21-beta-H-hopane-3-beta,22-diol. The cytochrome P450 monooxygenase afumB is responsible for both hydroxylation at C-24 and oxidations at C-30 of the afumA product. The glycosyltransferase afumC then catalyzes the glycosylation at C-24, using UDP-D-glucose as a donor, to produce fumihopaside A. AfumC is also able to accept UDP-D-galactose and UDP-D-glucuronic acid as donors to yield minor derivatives. Fumihopaside B, another minor derivative produced, is different from fumihopaside A due to the presence of a double bond between C-22 and C-29. This Aspergillus fumigatus (strain CBS 144.89 / FGSC A1163 / CEA10) (Neosartorya fumigata) protein is Glycosyltransferase afumC.